The sequence spans 244 residues: Tabinhibitin 8 (244 aa).

The signal sequence occupies residues 1–23 (MTSILVSRFKISALTLQYATSDS). One can recognise an SCP domain in the interval 67 to 194 (YTGGGIIVLR…KTPLFFSSNC (128 aa)). The Cell attachment site motif lies at 143 to 145 (RGD).

The protein belongs to the CRISP family. Expressed in salivary glands.

Its subcellular location is the secreted. Inhibits platelet aggregation induced by all agonists tested (ADP, arachidonic acid, the thromboxane A2 analog U46619, thrombin, and snake venom snaclecs (TMVA that activates platelet through GPIB, and stejnulxin that specifically acts through GPVI (GP6))). May act by competing with fibrinogen for binding to glycoprotein IIb/IIIa (ITGA2B/ITGB3). In Tabanus yao (Horsefly), this protein is Tabinhibitin 8.